Consider the following 308-residue polypeptide: Ribosomal RNA large subunit methyltransferase F (308 aa).

The protein belongs to the methyltransferase superfamily. METTL16/RlmF family.

It localises to the cytoplasm. It catalyses the reaction adenosine(1618) in 23S rRNA + S-adenosyl-L-methionine = N(6)-methyladenosine(1618) in 23S rRNA + S-adenosyl-L-homocysteine + H(+). Functionally, specifically methylates the adenine in position 1618 of 23S rRNA. This Salmonella heidelberg (strain SL476) protein is Ribosomal RNA large subunit methyltransferase F.